Reading from the N-terminus, the 301-residue chain is Phosducin-like protein (301 aa).

At Thr-2 the chain carries N-acetylthreonine. The tract at residues Tyr-15 to Ile-53 is disordered. Phosphoserine occurs at positions 20, 25, 226, 293, and 296. The Phosducin domain maps to Leu-37–Glu-299. The thioredoxin fold stretch occupies residues Phe-158–Asp-301.

This sequence belongs to the phosducin family. As to quaternary structure, forms a complex with the beta and gamma subunits of the GTP-binding protein, transducin. Interacts with the CCT chaperonin complex.

It localises to the cell projection. The protein localises to the cilium. Functions as a co-chaperone for CCT in the assembly of heterotrimeric G protein complexes, facilitates the assembly of both Gbeta-Ggamma and RGS-Gbeta5 heterodimers. Also acts as a positive regulator of hedgehog signaling and regulates ciliary function. The chain is Phosducin-like protein (PDCL) from Bos taurus (Bovine).